We begin with the raw amino-acid sequence, 149 residues long: MKVLLLEDVKNLGKAGEVCEVKDGYGNNFLIANKKAKLATNEVINKYKAEAKKKAEKEALEKAQKLQMVETLQTITLTIHKKVGANGSLFGAITKEEITERLKEQHASLNLDKKDIELKHPIKSTGIYEIEVKLGSGVVGAFKIDVVAE.

It belongs to the bacterial ribosomal protein bL9 family.

Its function is as follows. Binds to the 23S rRNA. This Helicobacter pylori (strain HPAG1) protein is Large ribosomal subunit protein bL9.